We begin with the raw amino-acid sequence, 287 residues long: MNSSYYQNQINRLEKDIADLQKKIADENKKEIDKNKQIDSVHRTINKNTSISTLNSKQRQIDGYQKDILNCRTKIASYQKSIATKSAELGKKRQELLKAQQSEQKKLQDDQLKFQKKLQSEIEIQKRHLETLIAQNYSTQNNKLVSTEDIPEPTKQYDFFISHASEDKDDIVRDLAEALRNNGFEVWYDEFELKIGDSLRKKIDYGLSNANYGIVIISPSFVKKNWTEYELNGMVAREMNGHKVILPIWHKITKDEVLRFSPSLADKLALNTSIHTIDDIVENLKNL.

The TIR domain maps to K155–L287. E230 is an active-site residue.

In terms of assembly, homodimer.

The enzyme catalyses NAD(+) = 2'cADPR + nicotinamide + H(+). Its function is as follows. NAD(+) hydrolase (NADase) that cleaves NAD(+) into nicotinamide and 2' cyclic ADP-D-ribose (2'cADPR). The polypeptide is 2' cyclic ADP-D-ribose synthase BtTIR (Bacteroides thetaiotaomicron).